The sequence spans 196 residues: Large ribosomal subunit protein bL9 (196 aa).

This sequence belongs to the bacterial ribosomal protein bL9 family.

Binds to the 23S rRNA. This is Large ribosomal subunit protein bL9 from Gluconobacter oxydans (strain 621H) (Gluconobacter suboxydans).